Reading from the N-terminus, the 283-residue chain is MPKICCSRSATQVVVAQKSNSGKGRNGEGGIKYGFSLIKGKSNHSMEDYHVAKFTNFNGNELGLFAIFDGHKGDHVAAYLQKHLFSNILKDGEFLVDPRRAIAKAYENTDQKILADNRTDLESGGSTAVTAILINGKALWIANVGDSRAIVSSRGKAKQMSVDHDPDDDTERSMIESKGGFVTNRPGDVPRVNGLLAVSRVFGDKNLKAYLNSEPEIKDVTIDSHTDFLILASDGISKVMSNQEAVDVAKKLKDPKEAARQVVAEALKRNSKDDISCIVVRFR.

Positions 32-282 (KYGFSLIKGK…DDISCIVVRF (251 aa)) constitute a PPM-type phosphatase domain. Aspartate 69, glycine 70, aspartate 234, and aspartate 273 together coordinate Mn(2+).

It belongs to the PP2C family. The cofactor is Mg(2+). It depends on Mn(2+) as a cofactor.

The enzyme catalyses O-phospho-L-seryl-[protein] + H2O = L-seryl-[protein] + phosphate. The catalysed reaction is O-phospho-L-threonyl-[protein] + H2O = L-threonyl-[protein] + phosphate. This chain is Probable protein phosphatase 2C 17, found in Arabidopsis thaliana (Mouse-ear cress).